We begin with the raw amino-acid sequence, 388 residues long: tRNA (guanine-N(7)-)-methyltransferase (388 aa).

S-adenosyl-L-methionine-binding residues include Glu129, Glu154, and Asp181. Substrate-binding residues include Lys207 and Asp237.

The protein belongs to the class I-like SAM-binding methyltransferase superfamily. TrmB family.

The catalysed reaction is guanosine(46) in tRNA + S-adenosyl-L-methionine = N(7)-methylguanosine(46) in tRNA + S-adenosyl-L-homocysteine. It functions in the pathway tRNA modification; N(7)-methylguanine-tRNA biosynthesis. In terms of biological role, catalyzes the formation of N(7)-methylguanine at position 46 (m7G46) in tRNA. This is tRNA (guanine-N(7)-)-methyltransferase from Wolinella succinogenes (strain ATCC 29543 / DSM 1740 / CCUG 13145 / JCM 31913 / LMG 7466 / NCTC 11488 / FDC 602W) (Vibrio succinogenes).